The primary structure comprises 203 residues: Cold-regulated 413 plasma membrane protein 2 (203 aa).

The Extracellular portion of the chain corresponds to 1–43 (MGRMDYLAMKTDDVDTVALVNSDMEELKVAAKKLFSDVSKLGG). A helical transmembrane segment spans residues 44–64 (LGFGVSFLKFLASFAAIYLLI). Over 65–74 (LDRTNWKTKM) the chain is Cytoplasmic. A helical transmembrane segment spans residues 75-95 (LTSLLIPYIFLSLPSVIFNFL). Topologically, residues 96 to 98 (SGD) are extracellular. The chain crosses the membrane as a helical span at residues 99–119 (VGKWIAFVAVVLRLFFPKHFP). Asp-120 is a topological domain (cytoplasmic). The chain crosses the membrane as a helical span at residues 121-141 (WLEMPGSLILLLVVSPHFLAH). Residues 142–144 (HIR) are Extracellular-facing. The helical transmembrane segment at 145-165 (GTWIGTVISLFIGCYLLQEHI) threads the bilayer. The Cytoplasmic segment spans residues 166–179 (RASGGFRNSFTQPR). A helical transmembrane segment spans residues 180-200 (GVSNTLGIILLLVYPVWALIV). Topologically, residues 201 to 203 (RVM) are extracellular.

Belongs to the Cold-regulated 413 protein family.

Its subcellular location is the cell membrane. This Arabidopsis thaliana (Mouse-ear cress) protein is Cold-regulated 413 plasma membrane protein 2 (COR413PM2).